The chain runs to 116 residues: Large ribosomal subunit protein bL17 (116 aa).

It belongs to the bacterial ribosomal protein bL17 family. As to quaternary structure, part of the 50S ribosomal subunit. Contacts protein L32.

The protein is Large ribosomal subunit protein bL17 of Helicobacter pylori (strain P12).